We begin with the raw amino-acid sequence, 412 residues long: STAGA complex 65 subunit gamma (412 aa).

Residues 81–107 (AQTQSQQQTEGVKAEESEPLPSCPGSP) are disordered. The residue at position 106 (serine 106) is a Phosphoserine. Lysine 269 participates in a covalent cross-link: Glycyl lysine isopeptide (Lys-Gly) (interchain with G-Cter in SUMO2). Serine 321 and serine 332 each carry phosphoserine. The interval 364-412 (EEPMSGMSEAGLPQSPDDSDSSYGSHSTDSLMGSSPVFNQRCRKRMRKI) is disordered. The span at 384-393 (SSYGSHSTDS) shows a compositional bias: low complexity.

Component of the STAGA transcription coactivator-HAT complex, at least composed of SUPT3H, SUPT7L, GCN5L2, TAF5L, TAF6L, TADA3L, TAD1L, TAF10, TAF12 and TAF9. Sumoylated.

The protein resides in the nucleus. The protein is STAGA complex 65 subunit gamma (Supt7l) of Mus musculus (Mouse).